The chain runs to 199 residues: Imidazoleglycerol-phosphate dehydratase (199 aa).

This sequence belongs to the imidazoleglycerol-phosphate dehydratase family.

Its subcellular location is the cytoplasm. It catalyses the reaction D-erythro-1-(imidazol-4-yl)glycerol 3-phosphate = 3-(imidazol-4-yl)-2-oxopropyl phosphate + H2O. It functions in the pathway amino-acid biosynthesis; L-histidine biosynthesis; L-histidine from 5-phospho-alpha-D-ribose 1-diphosphate: step 6/9. This Acidithiobacillus ferrooxidans (strain ATCC 53993 / BNL-5-31) (Leptospirillum ferrooxidans (ATCC 53993)) protein is Imidazoleglycerol-phosphate dehydratase.